The sequence spans 380 residues: Chaperone protein DnaJ (380 aa).

The 66-residue stretch at 5-70 (DFYEVLGVSR…QKRAAYDQYG (66 aa)) folds into the J domain. The segment at 135 to 213 (GCEKDIEIPT…CHGDGRVQKT (79 aa)) adopts a CR-type zinc-finger fold. Positions 148, 151, 165, 168, 187, 190, 201, and 204 each coordinate Zn(2+). CXXCXGXG motif repeat units follow at residues 148–155 (CEPCDGTG), 165–172 (CSTCHGQG), 187–194 (CPTCHGKG), and 201–208 (CNSCHGDG).

The protein belongs to the DnaJ family. In terms of assembly, homodimer. The cofactor is Zn(2+).

The protein resides in the cytoplasm. Functionally, participates actively in the response to hyperosmotic and heat shock by preventing the aggregation of stress-denatured proteins and by disaggregating proteins, also in an autonomous, DnaK-independent fashion. Unfolded proteins bind initially to DnaJ; upon interaction with the DnaJ-bound protein, DnaK hydrolyzes its bound ATP, resulting in the formation of a stable complex. GrpE releases ADP from DnaK; ATP binding to DnaK triggers the release of the substrate protein, thus completing the reaction cycle. Several rounds of ATP-dependent interactions between DnaJ, DnaK and GrpE are required for fully efficient folding. Also involved, together with DnaK and GrpE, in the DNA replication of plasmids through activation of initiation proteins. The protein is Chaperone protein DnaJ of Aliivibrio salmonicida (strain LFI1238) (Vibrio salmonicida (strain LFI1238)).